Consider the following 857-residue polypeptide: Putative serine/threonine-protein kinase receptor (857 aa).

Positions 1–32 (MKGARNIYHHSYMSFLLVFVVMILIHPALSIY) are cleaved as a signal peptide. Over 33 to 446 (INTLSSTESL…IAKKRNASGK (414 aa)) the chain is Extracellular. A Bulb-type lectin domain is found at 35–155 (TLSSTESLTI…SNNDASEYLW (121 aa)). 6 N-linked (GlcNAc...) asparagine glycosylation sites follow: Asn-47, Asn-120, Asn-196, Asn-260, Asn-389, and Asn-442. The PAN domain maps to 350-433 (CSGDGFTRMK…DGQDLYVRLA (84 aa)). Intrachain disulfides connect Cys-380-Cys-405 and Cys-388-Cys-390. Residues 447 to 466 (IISLTVGVSVLLLLIMFCLW) traverse the membrane as a helical segment. Residues 467–857 (KRKQKRAKAS…QYTCSVIDAR (391 aa)) are Cytoplasmic-facing. In terms of domain architecture, Protein kinase spans 528-779 (FSSCNKLGQG…PSIFQPQEVL (252 aa)). ATP is bound by residues 534–542 (LGQGGFGIV) and Lys-556. Asp-653 acts as the Proton acceptor in catalysis.

The protein belongs to the protein kinase superfamily. Ser/Thr protein kinase family. In terms of tissue distribution, predominantly in the pistil and anther.

It localises to the membrane. It carries out the reaction L-seryl-[protein] + ATP = O-phospho-L-seryl-[protein] + ADP + H(+). It catalyses the reaction L-threonyl-[protein] + ATP = O-phospho-L-threonyl-[protein] + ADP + H(+). Its function is as follows. Involved in sporophytic self-incompatibility system (the inability of flowering plants to achieve self-fertilization), probably acting in combination with S-locus-specific glycoproteins. Interaction with a ligand in the extracellular domain triggers the protein kinase activity of the cytoplasmic domain. The sequence is that of Putative serine/threonine-protein kinase receptor (SRK6) from Brassica oleracea var. viridis (Flowering kale).